The primary structure comprises 437 residues: Ribosomal protein uS12 methylthiotransferase RimO (437 aa).

In terms of domain architecture, MTTase N-terminal spans 4 to 114 (PRVSFVSLGC…VMNAVHEVAP (111 aa)). [4Fe-4S] cluster-binding residues include Cys13, Cys49, Cys78, Cys145, Cys149, and Cys152. The region spanning 131–369 (LTPRHYAYLK…MAKQQQISTN (239 aa)) is the Radical SAM core domain. Positions 372–437 (KKKVGKRLPV…DAYDLHGTAV (66 aa)) constitute a TRAM domain.

The protein belongs to the methylthiotransferase family. RimO subfamily. [4Fe-4S] cluster serves as cofactor.

Its subcellular location is the cytoplasm. The enzyme catalyses L-aspartate(89)-[ribosomal protein uS12]-hydrogen + (sulfur carrier)-SH + AH2 + 2 S-adenosyl-L-methionine = 3-methylsulfanyl-L-aspartate(89)-[ribosomal protein uS12]-hydrogen + (sulfur carrier)-H + 5'-deoxyadenosine + L-methionine + A + S-adenosyl-L-homocysteine + 2 H(+). Its function is as follows. Catalyzes the methylthiolation of an aspartic acid residue of ribosomal protein uS12. This is Ribosomal protein uS12 methylthiotransferase RimO from Brucella abortus (strain S19).